The following is a 499-amino-acid chain: NAD(P)H-quinone oxidoreductase chain 4, chloroplastic (499 aa).

14 consecutive transmembrane segments (helical) span residues 4–24 (LPWLTIIVILPISAGLLIPLF), 31–51 (MIRWYTLGICLLDLLLMTYIF), 87–107 (IGLILLTGFVTTLATLAAWPV), 113–130 (LLHFLMLAMYSGQLGLFA), 134–154 (ILLFFLMWELELIPVYLLLSM), 167–187 (FLLYTAGGSIFILMGALSMGL), 211–231 (ILLYLGFLIAYAIKLPIFPLH), 242–262 (HYSTCMLLAGVLLKMGGYGLI), 274–294 (SLFSPWLIIIGAVQIIYAALT), 305–325 (IAYSSISHMGFVIIGIGSMTY), 330–350 (GAILQMISHGLIGAALFFLVG), 386–406 (LALPGMSGFVAEFMIFLGVIT), 416–436 (IIITAIAAIGMILTPIYLLSM), and 462–482 (LFILICLFLPIIGIGLYPDLV).

The protein belongs to the complex I subunit 4 family.

It is found in the plastid. The protein localises to the chloroplast thylakoid membrane. The catalysed reaction is a plastoquinone + NADH + (n+1) H(+)(in) = a plastoquinol + NAD(+) + n H(+)(out). It catalyses the reaction a plastoquinone + NADPH + (n+1) H(+)(in) = a plastoquinol + NADP(+) + n H(+)(out). The protein is NAD(P)H-quinone oxidoreductase chain 4, chloroplastic of Cryptomeria japonica (Japanese cedar).